The following is a 626-amino-acid chain: Threonine--tRNA ligase (626 aa).

Residues 1–144 (MRMLLIHADY…LSRTIVPEEG (144 aa)) are editing domain. The segment at 207–506 (PHVRLMLEHE…QAQGKKPMFP (300 aa)) is catalytic. 3 residues coordinate Zn(2+): Cys-299, His-351, and His-475.

It belongs to the class-II aminoacyl-tRNA synthetase family. In terms of assembly, homodimer. Zn(2+) is required as a cofactor.

It localises to the cytoplasm. It carries out the reaction tRNA(Thr) + L-threonine + ATP = L-threonyl-tRNA(Thr) + AMP + diphosphate + H(+). In terms of biological role, catalyzes the attachment of threonine to tRNA(Thr) in a two-step reaction: L-threonine is first activated by ATP to form Thr-AMP and then transferred to the acceptor end of tRNA(Thr). Also edits incorrectly charged L-seryl-tRNA(Thr). The polypeptide is Threonine--tRNA ligase (Thermococcus gammatolerans (strain DSM 15229 / JCM 11827 / EJ3)).